The sequence spans 430 residues: MGRSYEKSKQAFEEAQHLMPGGVNSPVRAFKSVNTDPIFMERGKGAKIYDIDGNEYIDYVLSWGPLILGHTNDRVVESIQRVAEKGTSFGASTLVENELAKLVSERVPSIEVIRMVSSGTEATMSALRLARGFTGRNKIVKFEGCYHGHGDSLLIKAGSGVATLGLPDSPGVPEGTASNTITVPYNDLESIQVAFQEFGDDIAGVIVEPVAGNMGVVPPQDGFLQGLRDITEQYGALLIFDEVMTGFRVDYHCAQGYFGVTPDLTCLGKVIGGGLPVGAYGGRADIMRQIAPSGPIYQAGTLSGNPLAMTAGLETLKQLTPESYEEFRRKGDRLEEGISNAAKTHGIPLTFNRAGSMIGFFFTDEEVINYDIAKNADLALFAEFYKEMADHGIFLPPSQFEGLFLSTAHTDEDIEYTIETVEKVFQKLRR.

An N6-(pyridoxal phosphate)lysine modification is found at K269.

This sequence belongs to the class-III pyridoxal-phosphate-dependent aminotransferase family. HemL subfamily. Homodimer. Pyridoxal 5'-phosphate serves as cofactor.

It localises to the cytoplasm. It catalyses the reaction (S)-4-amino-5-oxopentanoate = 5-aminolevulinate. It functions in the pathway porphyrin-containing compound metabolism; protoporphyrin-IX biosynthesis; 5-aminolevulinate from L-glutamyl-tRNA(Glu): step 2/2. The protein is Glutamate-1-semialdehyde 2,1-aminomutase 2 of Bacillus pumilus (strain SAFR-032).